The primary structure comprises 522 residues: Light-independent protochlorophyllide reductase subunit B (522 aa).

Asp36 is a [4Fe-4S] cluster binding site. The active-site Proton donor is the Asp290. Substrate is bound at residue 425-426 (GL).

The protein belongs to the ChlB/BchB/BchZ family. In terms of assembly, protochlorophyllide reductase is composed of three subunits; ChlL, ChlN and ChlB. Forms a heterotetramer of two ChlB and two ChlN subunits. [4Fe-4S] cluster serves as cofactor.

It catalyses the reaction chlorophyllide a + oxidized 2[4Fe-4S]-[ferredoxin] + 2 ADP + 2 phosphate = protochlorophyllide a + reduced 2[4Fe-4S]-[ferredoxin] + 2 ATP + 2 H2O. The protein operates within porphyrin-containing compound metabolism; chlorophyll biosynthesis (light-independent). Component of the dark-operative protochlorophyllide reductase (DPOR) that uses Mg-ATP and reduced ferredoxin to reduce ring D of protochlorophyllide (Pchlide) to form chlorophyllide a (Chlide). This reaction is light-independent. The NB-protein (ChlN-ChlB) is the catalytic component of the complex. The protein is Light-independent protochlorophyllide reductase subunit B of Synechococcus sp. (strain CC9311).